Consider the following 174-residue polypeptide: Ribosome maturation factor RimM (174 aa).

In terms of domain architecture, PRC barrel spans 98–171 (EGEFYFHEII…KIEIELMEGL (74 aa)).

The protein belongs to the RimM family. Binds ribosomal protein uS19.

It localises to the cytoplasm. In terms of biological role, an accessory protein needed during the final step in the assembly of 30S ribosomal subunit, possibly for assembly of the head region. Essential for efficient processing of 16S rRNA. May be needed both before and after RbfA during the maturation of 16S rRNA. It has affinity for free ribosomal 30S subunits but not for 70S ribosomes. This chain is Ribosome maturation factor RimM, found in Bacillus subtilis (strain 168).